Reading from the N-terminus, the 271-residue chain is Formamidopyrimidine-DNA glycosylase (271 aa).

P2 serves as the catalytic Schiff-base intermediate with DNA. E3 functions as the Proton donor in the catalytic mechanism. K58 (proton donor; for beta-elimination activity) is an active-site residue. DNA contacts are provided by H92, R111, and R152. The FPG-type zinc-finger motif lies at 237 to 271; sequence MVYGREGQACKHCGRELKHATIGQRATVWCAACQR. Catalysis depends on R261, which acts as the Proton donor; for delta-elimination activity.

The protein belongs to the FPG family. As to quaternary structure, monomer. The cofactor is Zn(2+).

It catalyses the reaction Hydrolysis of DNA containing ring-opened 7-methylguanine residues, releasing 2,6-diamino-4-hydroxy-5-(N-methyl)formamidopyrimidine.. The catalysed reaction is 2'-deoxyribonucleotide-(2'-deoxyribose 5'-phosphate)-2'-deoxyribonucleotide-DNA = a 3'-end 2'-deoxyribonucleotide-(2,3-dehydro-2,3-deoxyribose 5'-phosphate)-DNA + a 5'-end 5'-phospho-2'-deoxyribonucleoside-DNA + H(+). Involved in base excision repair of DNA damaged by oxidation or by mutagenic agents. Acts as a DNA glycosylase that recognizes and removes damaged bases. Has a preference for oxidized purines, such as 7,8-dihydro-8-oxoguanine (8-oxoG). Has AP (apurinic/apyrimidinic) lyase activity and introduces nicks in the DNA strand. Cleaves the DNA backbone by beta-delta elimination to generate a single-strand break at the site of the removed base with both 3'- and 5'-phosphates. In Xanthomonas campestris pv. campestris (strain B100), this protein is Formamidopyrimidine-DNA glycosylase.